A 681-amino-acid chain; its full sequence is MRKPKLSKLERLEKFDIFVSLSKQRSVQILMAVGLLYMLLITFEIPFVFKTGLSSLSQDPLTRPEKHNSQRELQERRAPTRPLKSLLYQESQSESPAQGLRRRTRILSSLRFDPETFNPSSKDGSVELHKSAKVAWEVGRKIWEELESGKTLKALEKEKKKKIEEHGTNSCSLSVSLTGSDLLKRGNIMELPCGLTLGSHITVVGKPRAAHSEKDPKISMLKEGDEAVKVSQFKLELQGLKAVEGEEPPRILHLNPRLKGDWSGKPVIEQNTCYRMQWGSAQRCEGWRSRDDEETVDGQVKCEKWARDDSITSKEEESSKAASWWLSRLIGRSKKVTVEWPFPFTVDKLFVLTLSAGLEGYHVSVDGKHVTSFPYRTGFTLEDATGLTINGDIDVHSVFAGSLPTSHPSFSPQRHLELSSNWQAPSLPDEQVDMFIGILSAGNHFAERMAVRRSWMQHKLVKSSKVVARFFVALHSRKEVNVELKKEAEFFGDIVIVPYMDSYDLVVLKTVAICEYGAHQLAAKFIMKCDDDTFVQVDAVLSEAKKTPTDRSLYIGNINYYHKPLRQGKWSVTYEEWPEEDYPPYANGPGYILSNDISRFIVKEFEKHKLRMFKMEDVSVGMWVEQFNNGTKPVDYIHSLRFCQFGCIENYLTAHYQSPRQMICLWDKLVLTGKPQCCNMR.

At 1 to 28 the chain is on the cytoplasmic side; it reads MRKPKLSKLERLEKFDIFVSLSKQRSVQ. A helical; Signal-anchor for type II membrane protein transmembrane segment spans residues 29–49; that stretch reads ILMAVGLLYMLLITFEIPFVF. Topologically, residues 50 to 681 are lumenal; it reads KTGLSSLSQD…TGKPQCCNMR (632 aa). Residues 57 to 80 form a disordered region; it reads SQDPLTRPEKHNSQRELQERRAPT. Residues 62 to 78 show a composition bias toward basic and acidic residues; it reads TRPEKHNSQRELQERRA. In terms of domain architecture, Galectin spans 187-401; sequence NIMELPCGLT…DIDVHSVFAG (215 aa). The N-linked (GlcNAc...) asparagine glycan is linked to asparagine 629.

It belongs to the glycosyltransferase 31 family. Mn(2+) serves as cofactor. Expressed in junveile leaves and stems, and at lower levels in cauline leaves and siliques.

It localises to the golgi apparatus membrane. The protein operates within protein modification; protein glycosylation. In terms of biological role, possesses hydroxyproline O-galactosyltransferase activity. Transfers galactose from UDP-galactose to hydroxyproline residues in the arabinogalactan proteins (AGPs). Is specific for AGPs containing non-contiguous peptidyl hydroxyproline residues. Utilizes UDP-galactose solely as sugar donor. The addition of galactose onto the peptidyl hydroxyproline residues in AGP core proteins represents the first committed step in arabinogalactan polysaccharide addition. AGP glycans play essential roles in both vegetative and reproductive plant growth. The protein is Hydroxyproline O-galactosyltransferase GALT6 of Arabidopsis thaliana (Mouse-ear cress).